Consider the following 207-residue polypeptide: Protein N-terminal glutamine amidohydrolase (207 aa).

Active-site residues include C30, H83, and D99.

It belongs to the NTAQ1 family. As to quaternary structure, monomer.

It localises to the cytoplasm. Its subcellular location is the cytosol. The protein localises to the nucleus. It carries out the reaction N-terminal L-glutaminyl-[protein] + H2O = N-terminal L-glutamyl-[protein] + NH4(+). In terms of biological role, mediates the side-chain deamidation of N-terminal glutamine residues to glutamate, an important step in N-end rule pathway of protein degradation. Conversion of the resulting N-terminal glutamine to glutamate renders the protein susceptible to arginylation, polyubiquitination and degradation as specified by the N-end rule. Does not act on substrates with internal or C-terminal glutamine and does not act on non-glutamine residues in any position. Does not deaminate acetylated N-terminal glutamine. With the exception of proline, all tested second-position residues on substrate peptides do not greatly influence the activity. In contrast, a proline at position 2, virtually abolishes deamidation of N-terminal glutamine. The chain is Protein N-terminal glutamine amidohydrolase (Ntaq1) from Rattus norvegicus (Rat).